A 261-amino-acid chain; its full sequence is Cytochrome c oxidase subunit 3 (261 aa).

Over 1–15 (MTHQTHAYHMVNPSP) the chain is Mitochondrial matrix. Residues 16-34 (WPLTGALSALLMTSGLIMW) traverse the membrane as a helical segment. Residues 35–40 (FHFNST) are Mitochondrial intermembrane-facing. Residues 41–66 (TLLMLGLTTNMLTMYQWWRDIIREST) form a helical membrane-spanning segment. Over 67–72 (FQGHHT) the chain is Mitochondrial matrix. A helical transmembrane segment spans residues 73–105 (PSVQKGLRYGMILFIISEVLFFTGFFWAFYHSS). Residues 106–128 (LAPTPELGGCWPPTGIHPLNPLE) lie on the Mitochondrial intermembrane side of the membrane. The chain crosses the membrane as a helical span at residues 129-152 (VPLLNTSVLLASGVSITWAHHSLM). The Mitochondrial matrix portion of the chain corresponds to 153-155 (EGN). Residues 156 to 183 (RNHMLQALFITIALGVYFTLLQASEYYE) form a helical membrane-spanning segment. At 184 to 190 (APFTISD) the chain is on the mitochondrial intermembrane side. Residues 191–223 (GVYGSTFFVATGFHGLHVIIGSTFLIVCFFRQL) form a helical membrane-spanning segment. The Mitochondrial matrix segment spans residues 224-232 (KFHFTSNHH). A helical membrane pass occupies residues 233–256 (FGFEAAAWYWHFVDVVWLFLYVSI). Over 257 to 261 (YWWGS) the chain is Mitochondrial intermembrane.

This sequence belongs to the cytochrome c oxidase subunit 3 family. As to quaternary structure, component of the cytochrome c oxidase (complex IV, CIV), a multisubunit enzyme composed of 14 subunits. The complex is composed of a catalytic core of 3 subunits MT-CO1, MT-CO2 and MT-CO3, encoded in the mitochondrial DNA, and 11 supernumerary subunits COX4I, COX5A, COX5B, COX6A, COX6B, COX6C, COX7A, COX7B, COX7C, COX8 and NDUFA4, which are encoded in the nuclear genome. The complex exists as a monomer or a dimer and forms supercomplexes (SCs) in the inner mitochondrial membrane with NADH-ubiquinone oxidoreductase (complex I, CI) and ubiquinol-cytochrome c oxidoreductase (cytochrome b-c1 complex, complex III, CIII), resulting in different assemblies (supercomplex SCI(1)III(2)IV(1) and megacomplex MCI(2)III(2)IV(2)).

The protein resides in the mitochondrion inner membrane. The catalysed reaction is 4 Fe(II)-[cytochrome c] + O2 + 8 H(+)(in) = 4 Fe(III)-[cytochrome c] + 2 H2O + 4 H(+)(out). Its function is as follows. Component of the cytochrome c oxidase, the last enzyme in the mitochondrial electron transport chain which drives oxidative phosphorylation. The respiratory chain contains 3 multisubunit complexes succinate dehydrogenase (complex II, CII), ubiquinol-cytochrome c oxidoreductase (cytochrome b-c1 complex, complex III, CIII) and cytochrome c oxidase (complex IV, CIV), that cooperate to transfer electrons derived from NADH and succinate to molecular oxygen, creating an electrochemical gradient over the inner membrane that drives transmembrane transport and the ATP synthase. Cytochrome c oxidase is the component of the respiratory chain that catalyzes the reduction of oxygen to water. Electrons originating from reduced cytochrome c in the intermembrane space (IMS) are transferred via the dinuclear copper A center (CU(A)) of subunit 2 and heme A of subunit 1 to the active site in subunit 1, a binuclear center (BNC) formed by heme A3 and copper B (CU(B)). The BNC reduces molecular oxygen to 2 water molecules using 4 electrons from cytochrome c in the IMS and 4 protons from the mitochondrial matrix. In Pelea capreolus (Gray rhebok), this protein is Cytochrome c oxidase subunit 3 (MT-CO3).